A 659-amino-acid polypeptide reads, in one-letter code: Endoglucanase A (659 aa).

The tract at residues 1 to 500 is catalytic; that stretch reads MLIFETYLIL…SKLPNFPPKE (500 aa). The Nucleophile role is filled by Asp101. The tract at residues 413–433 is disordered; the sequence is NSPKHPHHRTAHGSWSNQLTN. Catalysis depends on residues His419, Asp457, and Glu466. Residues 501–658 form the CBM3 domain; it reads QVEDEFFVEA…GVLVFGTLPD (158 aa).

It belongs to the glycosyl hydrolase 9 (cellulase E) family.

It is found in the secreted. The catalysed reaction is Endohydrolysis of (1-&gt;4)-beta-D-glucosidic linkages in cellulose, lichenin and cereal beta-D-glucans.. Its activity is regulated as follows. Strongly inhibited by ZnCl(2) and by EDTA. Its function is as follows. Active on carboxymethyl cellulose and carboxymethyl cellulose-RBB but not avicel, xanthan gum, carboxymethyl-curdulan-RBB or carboxymethyl-xylan-RBB. The protein is Endoglucanase A (eglA) of Bacillus pumilus (Bacillus mesentericus).